The following is a 398-amino-acid chain: Carbamoyl phosphate synthase small chain (398 aa).

A CPSase region spans residues 1-204; sequence MSPLLPSFPP…PAYGTLDTGK (204 aa). Positions 53, 256, and 258 each coordinate L-glutamine. Residues 208 to 395 enclose the Glutamine amidotransferase type-1 domain; the sequence is KVVAYDFGVK…VELMNAASKK (188 aa). The active-site Nucleophile is the C284. Residues L285, Q288, N326, G328, and F329 each coordinate L-glutamine. Active-site residues include H368 and E370.

The protein belongs to the CarA family. Composed of two chains; the small (or glutamine) chain promotes the hydrolysis of glutamine to ammonia, which is used by the large (or ammonia) chain to synthesize carbamoyl phosphate. Tetramer of heterodimers (alpha,beta)4.

It catalyses the reaction hydrogencarbonate + L-glutamine + 2 ATP + H2O = carbamoyl phosphate + L-glutamate + 2 ADP + phosphate + 2 H(+). The enzyme catalyses L-glutamine + H2O = L-glutamate + NH4(+). Its pathway is amino-acid biosynthesis; L-arginine biosynthesis; carbamoyl phosphate from bicarbonate: step 1/1. It participates in pyrimidine metabolism; UMP biosynthesis via de novo pathway; (S)-dihydroorotate from bicarbonate: step 1/3. Functionally, small subunit of the glutamine-dependent carbamoyl phosphate synthetase (CPSase). CPSase catalyzes the formation of carbamoyl phosphate from the ammonia moiety of glutamine, carbonate, and phosphate donated by ATP, constituting the first step of 2 biosynthetic pathways, one leading to arginine and/or urea and the other to pyrimidine nucleotides. The small subunit (glutamine amidotransferase) binds and cleaves glutamine to supply the large subunit with the substrate ammonia. The protein is Carbamoyl phosphate synthase small chain of Polynucleobacter necessarius subsp. necessarius (strain STIR1).